The following is a 443-amino-acid chain: Probable protein S-acyltransferase 7 (443 aa).

Transmembrane regions (helical) follow at residues 44-64 (SLAL…IFVA) and 76-96 (GVSI…LLLL). The DHHC domain maps to 149–199 (KYCDTCMLYRPPRCSHCSICNNCVERFDHHCPWVGQCIGMRNYRFFFMFVF). Residue cysteine 179 is the S-palmitoyl cysteine intermediate of the active site. 2 helical membrane passes run 193 to 213 (FFFM…AFCW) and 237 to 257 (SIVL…LTVF). Phosphoserine occurs at positions 327 and 377. The segment covering 382 to 392 (ATVDEQSDRPS) has biased composition (basic and acidic residues). Residues 382–443 (ATVDEQSDRP…SGLVTENRPT (62 aa)) are disordered. Position 406 is a phosphoserine (serine 406).

It belongs to the DHHC palmitoyltransferase family.

The protein resides in the cell membrane. It carries out the reaction L-cysteinyl-[protein] + hexadecanoyl-CoA = S-hexadecanoyl-L-cysteinyl-[protein] + CoA. Palmitoyl acyltransferase. This is Probable protein S-acyltransferase 7 (PAT07) from Arabidopsis thaliana (Mouse-ear cress).